Consider the following 380-residue polypeptide: MPTTELISYDEAQNSAFDNVLHGKSKESRGGMRAMMNKDNKAHAAAVDEYFQFFDNKKAEDEVEAVRQERTDNYASLTRQYYNLATDLYEYGWSQSFHFCRFAYGESFDRAIARHEHYLAHNIGIKPGMKVLDVGCGVGGPAREIVKFTGAHVTGLNINEYQVGRAGIYAEKEGLSDKLKFVQGDFMKMPFPDNSFDAVYAIEATVHAPSLEGVYSEIRRVLKPGGIFGVYEWLMTDIYDNDDLEQRRIRLDIELGDGIAQMFKIDHGLSAIKAAGFELLHHEDLAATDDGTAPWYWPLDSDMRYAQNLSDLLTVFRMNKWGRLVMHNLIGVLEACSIAPKGTRKTADGLAKGADALVEGGKRKLFTPMYLMVGKKPEKI.

It belongs to the class I-like SAM-binding methyltransferase superfamily. Erg6/SMT family.

The catalysed reaction is lanosterol + S-adenosyl-L-methionine = eburicol + S-adenosyl-L-homocysteine + H(+). It participates in steroid metabolism; ergosterol biosynthesis. In terms of biological role, sterol 24-C-methyltransferase; part of the third module of ergosterol biosynthesis pathway that includes the late steps of the pathway. ERG6A and ERG6B methylate lanosterol at C-24 to produce eburicol. The third module or late pathway involves the ergosterol synthesis itself through consecutive reactions that mainly occur in the endoplasmic reticulum (ER) membrane. Firstly, the squalene synthase ERG9 catalyzes the condensation of 2 farnesyl pyrophosphate moieties to form squalene, which is the precursor of all steroids. Squalene synthase is crucial for balancing the incorporation of farnesyl diphosphate (FPP) into sterol and nonsterol isoprene synthesis. Secondly, squalene is converted into lanosterol by the consecutive action of the squalene epoxidase ERG1 and the lanosterol synthase ERG7. Then, the delta(24)-sterol C-methyltransferase ERG6 methylates lanosterol at C-24 to produce eburicol. Eburicol is the substrate of the sterol 14-alpha demethylase encoded by CYP51A, CYP51B and CYP51C, to yield 4,4,24-trimethyl ergosta-8,14,24(28)-trienol. CYP51B encodes the enzyme primarily responsible for sterol 14-alpha-demethylation, and plays an essential role in ascospore formation. CYP51A encodes an additional sterol 14-alpha-demethylase, induced on ergosterol depletion and responsible for the intrinsic variation in azole sensitivity. The third CYP51 isoform, CYP51C, does not encode a sterol 14-alpha-demethylase, but is required for full virulence on host wheat ears. The C-14 reductase ERG24 then reduces the C14=C15 double bond which leads to 4,4-dimethylfecosterol. A sequence of further demethylations at C-4, involving the C-4 demethylation complex containing the C-4 methylsterol oxidases ERG25, the sterol-4-alpha-carboxylate 3-dehydrogenase ERG26 and the 3-keto-steroid reductase ERG27, leads to the production of fecosterol via 4-methylfecosterol. ERG28 has a role as a scaffold to help anchor ERG25, ERG26 and ERG27 to the endoplasmic reticulum. The C-8 sterol isomerase ERG2 then catalyzes the reaction which results in unsaturation at C-7 in the B ring of sterols and thus converts fecosterol to episterol. The sterol-C5-desaturases ERG3A and ERG3BB then catalyze the introduction of a C-5 double bond in the B ring to produce 5-dehydroepisterol. The C-22 sterol desaturases ERG5A and ERG5B further convert 5-dehydroepisterol into ergosta-5,7,22,24(28)-tetraen-3beta-ol by forming the C-22(23) double bond in the sterol side chain. Finally, ergosta-5,7,22,24(28)-tetraen-3beta-ol is substrate of the C-24(28) sterol reductase ERG4 to produce ergosterol. The sequence is that of Sterol 24-C-methyltransferase ERG6B from Gibberella zeae (strain ATCC MYA-4620 / CBS 123657 / FGSC 9075 / NRRL 31084 / PH-1) (Wheat head blight fungus).